Here is a 312-residue protein sequence, read N- to C-terminus: Malate dehydrogenase (312 aa).

Residues 7 to 12 (GAGNVG) and aspartate 32 each bind NAD(+). Substrate is bound by residues arginine 82 and arginine 88. NAD(+) is bound by residues asparagine 95 and 118-120 (VSN). 2 residues coordinate substrate: asparagine 120 and arginine 151. The active-site Proton acceptor is histidine 175.

The protein belongs to the LDH/MDH superfamily. MDH type 3 family.

The catalysed reaction is (S)-malate + NAD(+) = oxaloacetate + NADH + H(+). Catalyzes the reversible oxidation of malate to oxaloacetate. This Cytophaga hutchinsonii (strain ATCC 33406 / DSM 1761 / CIP 103989 / NBRC 15051 / NCIMB 9469 / D465) protein is Malate dehydrogenase.